The chain runs to 403 residues: Transcription factor E2F1 (403 aa).

Positions 44–85 (ATPQPSRPGPAPRRPALGRPPVKRKLNLETDHQYIAESLPAA) are cyclin A/CDK2 binding. Residues 45-64 (TPQPSRPGPAPRRPALGRPP) form a disordered region. A DNA-binding region spans residues 87-171 (GRARIPGRGA…KNNIQWLGSQ (85 aa)). Positions 130–151 (LNWAAEVLKVQKRRIYDITNVL) are leucine-zipper. Positions 135–171 (EVLKVQKRRIYDITNVLEGIQLITKKSKNNIQWLGSQ) match the DEF box motif. A dimerization region spans residues 172 to 261 (VAAGASSRQR…VSDPGEAFQV (90 aa)). The segment at 335 to 403 (PTEDVSLSPL…DFGDFTHLDF (69 aa)) is transactivation. Positions 375–392 (QDYHFGLEEGEGISELFD) are retinoblastoma protein RB1 binding.

This sequence belongs to the E2F/DP family. In terms of assembly, component of the DRTF1/E2F transcription factor complex. Forms heterodimers with DP family members. The E2F1 complex binds specifically hypophosphorylated RB1, the interaction represses E2F1-driven transcription. During the cell cycle, RB1 becomes phosphorylated in mid-to-late G1 phase, detaches from the DRTF1/E2F complex, rendering E2F transcriptionally active. Viral oncoproteins, notably E1A, T-antigen and HPV E7, are capable of sequestering RB1, thus releasing the active complex.

It localises to the nucleus. Its function is as follows. Transcription activator that binds DNA cooperatively with DP proteins through the E2 recognition site, 5'-TTTC[CG]CGC-3' found in the promoter region of a number of genes whose products are involved in cell cycle regulation or in DNA replication. The DRTF1/E2F complex functions in the control of cell-cycle progression from G1 to S phase. E2F1 binds preferentially RB1 in a cell-cycle dependent manner. It can mediate both cell proliferation and TP53/p53-dependent apoptosis. Blocks adipocyte differentiation by binding to specific promoters repressing CEBPA binding to its target gene promoters. Positively regulates transcription of RRP1B. The chain is Transcription factor E2F1 from Gallus gallus (Chicken).